We begin with the raw amino-acid sequence, 548 residues long: Probable malate:quinone oxidoreductase (548 aa).

The disordered stretch occupies residues 522–548 (KPQAADSTPKPQLKPKPVQKEVADIAL). The segment covering 539–548 (VQKEVADIAL) has biased composition (basic and acidic residues).

Belongs to the MQO family. FAD serves as cofactor.

The enzyme catalyses (S)-malate + a quinone = a quinol + oxaloacetate. It functions in the pathway carbohydrate metabolism; tricarboxylic acid cycle; oxaloacetate from (S)-malate (quinone route): step 1/1. The protein is Probable malate:quinone oxidoreductase of Escherichia coli O9:H4 (strain HS).